The following is a 253-amino-acid chain: MDLATLLGLIGGFAFVIMAMVLGGSIGMFVDVTSILIVVGGSIFVVLMKFTMGQFFGATKIAGKAFMFKADEPEDLIAKIVEMADAARKGGFLALEEMEINNTFMQKGIDLLVDGHDADVVRAALKKDIALTDERHTQGTGVFRAFGDVAPAMGMIGTLVGLVAMLSNMDDPKAIGPAMAVALLTTLYGAILSNMVFFPIADKLSLRRDQETLNRRLIMDGVLAIQDGQNPRVIDSYLKNYLNEGKRALEIDE.

The next 4 helical transmembrane spans lie at leucine 6–isoleucine 26, methionine 28–methionine 48, phenylalanine 146–leucine 166, and alanine 180–isoleucine 200. Residues alanine 201–glutamate 253 are Cytoplasmic-facing.

This sequence belongs to the MotA family. In terms of assembly, each stator complex is composed of 4 PomA and 2 PomB subunits. 2 A subunits and 1 B subunit are thought to form a single ion channel, so that each stator complex contains two channels.

It localises to the cell inner membrane. PomA and PomB comprise the stator element of the flagellar motor complex. Required for rotation of the flagellar motor. Probable transmembrane proton channel. The protein is Chemotaxis protein PomA (pomA) of Vibrio alginolyticus.